Reading from the N-terminus, the 173-residue chain is Large ribosomal subunit protein uL10 (173 aa).

This sequence belongs to the universal ribosomal protein uL10 family. As to quaternary structure, part of the ribosomal stalk of the 50S ribosomal subunit. The N-terminus interacts with L11 and the large rRNA to form the base of the stalk. The C-terminus forms an elongated spine to which L12 dimers bind in a sequential fashion forming a multimeric L10(L12)X complex.

Functionally, forms part of the ribosomal stalk, playing a central role in the interaction of the ribosome with GTP-bound translation factors. This chain is Large ribosomal subunit protein uL10, found in Cupriavidus necator (strain ATCC 17699 / DSM 428 / KCTC 22496 / NCIMB 10442 / H16 / Stanier 337) (Ralstonia eutropha).